Consider the following 511-residue polypeptide: 2,3-bisphosphoglycerate-independent phosphoglycerate mutase (511 aa).

Residue Asp-12 participates in Mn(2+) binding. Tyr-36 is subject to Phosphotyrosine. Residue Ser-62 participates in Mn(2+) binding. Ser-62 serves as the catalytic Phosphoserine intermediate. Substrate is bound by residues His-123, 153 to 154 (RD), Arg-185, Arg-191, 261 to 264 (RPDR), and Lys-336. Asp-403, His-407, Asp-444, His-445, and His-462 together coordinate Mn(2+).

Belongs to the BPG-independent phosphoglycerate mutase family. As to quaternary structure, monomer. Requires Mn(2+) as cofactor.

The catalysed reaction is (2R)-2-phosphoglycerate = (2R)-3-phosphoglycerate. It functions in the pathway carbohydrate degradation; glycolysis; pyruvate from D-glyceraldehyde 3-phosphate: step 3/5. In terms of biological role, essential for rapid growth and for sporulation. Catalyzes the interconversion of 2-phosphoglycerate and 3-phosphoglycerate. This Bacillus licheniformis (strain ATCC 14580 / DSM 13 / JCM 2505 / CCUG 7422 / NBRC 12200 / NCIMB 9375 / NCTC 10341 / NRRL NRS-1264 / Gibson 46) protein is 2,3-bisphosphoglycerate-independent phosphoglycerate mutase.